The chain runs to 217 residues: Elongation factor Ts (217 aa).

The tract at residues 82-85 (TDFV) is involved in Mg(2+) ion dislocation from EF-Tu.

This sequence belongs to the EF-Ts family.

It is found in the cytoplasm. Its function is as follows. Associates with the EF-Tu.GDP complex and induces the exchange of GDP to GTP. It remains bound to the aminoacyl-tRNA.EF-Tu.GTP complex up to the GTP hydrolysis stage on the ribosome. In Desulfitobacterium hafniense (strain DSM 10664 / DCB-2), this protein is Elongation factor Ts.